Here is a 143-residue protein sequence, read N- to C-terminus: MFLGTYTPKLDDKGRLTLPAKFRDALAGGLMVTKSQDHSLAVYPRDEFEKLARRASQASRSNPEARAFLRSLAAATDEQHPDAQGRITLSADHRRYANLSKDCVVIGSVDYLEIWDAQAWQEYQQAHEENFSAATDETLRDII.

SpoVT-AbrB domains follow at residues 5 to 47 and 76 to 119; these read TYTP…PRDE and TDEQ…DAQA.

It belongs to the MraZ family. Forms oligomers.

It localises to the cytoplasm. Its subcellular location is the nucleoid. The sequence is that of Transcriptional regulator MraZ from Mycolicibacterium smegmatis (strain ATCC 700084 / mc(2)155) (Mycobacterium smegmatis).